We begin with the raw amino-acid sequence, 382 residues long: Succinyl-diaminopimelate desuccinylase (382 aa).

Histidine 71 serves as a coordination point for Zn(2+). Aspartate 73 is a catalytic residue. A Zn(2+)-binding site is contributed by aspartate 105. Residue glutamate 139 is the Proton acceptor of the active site. Residues glutamate 140, glutamate 168, and histidine 354 each contribute to the Zn(2+) site.

The protein belongs to the peptidase M20A family. DapE subfamily. Homodimer. The cofactor is Zn(2+). Requires Co(2+) as cofactor.

It carries out the reaction N-succinyl-(2S,6S)-2,6-diaminopimelate + H2O = (2S,6S)-2,6-diaminopimelate + succinate. Its pathway is amino-acid biosynthesis; L-lysine biosynthesis via DAP pathway; LL-2,6-diaminopimelate from (S)-tetrahydrodipicolinate (succinylase route): step 3/3. Catalyzes the hydrolysis of N-succinyl-L,L-diaminopimelic acid (SDAP), forming succinate and LL-2,6-diaminopimelate (DAP), an intermediate involved in the bacterial biosynthesis of lysine and meso-diaminopimelic acid, an essential component of bacterial cell walls. The protein is Succinyl-diaminopimelate desuccinylase of Stutzerimonas stutzeri (strain A1501) (Pseudomonas stutzeri).